The following is a 159-amino-acid chain: Putative ribosomal RNA large subunit methyltransferase H (159 aa).

Residues L76, G108, and 127–132 (FSKMTF) each bind S-adenosyl-L-methionine.

It belongs to the RNA methyltransferase RlmH family.

The protein resides in the cytoplasm. The catalysed reaction is pseudouridine(1915) in 23S rRNA + S-adenosyl-L-methionine = N(3)-methylpseudouridine(1915) in 23S rRNA + S-adenosyl-L-homocysteine + H(+). Its function is as follows. Specifically methylates the pseudouridine at position 1915 (m3Psi1915) in 23S rRNA. The protein is Putative ribosomal RNA large subunit methyltransferase H of Methanococcus maripaludis (strain C6 / ATCC BAA-1332).